Reading from the N-terminus, the 181-residue chain is CASP-like protein 5A1 (181 aa).

At 1–38 the chain is on the cytoplasmic side; it reads MFASRPVVHPLEVAAPAHPVQQPAPGVLMKDLPGMPGT. Residues 39–59 traverse the membrane as a helical segment; the sequence is PGGLGLRVLQLLFAAISLAVM. Topologically, residues 60 to 77 are extracellular; the sequence is SSTADFASVSAFCYLITT. The helical transmembrane segment at 78-98 threads the bilayer; the sequence is TVLQCVWSLTVAIVDIYALLV. Over 99-115 the chain is Cytoplasmic; the sequence is KRCLQNRRAVTLFSIGD. The helical transmembrane segment at 116-136 threads the bilayer; it reads GITWLVSFSGACAAAGIPVLI. The Extracellular portion of the chain corresponds to 137 to 153; that stretch reads DADLIMCSENPCASFQT. Residues 154–174 traverse the membrane as a helical segment; sequence AVAMGFMCCFSLLPSFLLNFY. The Cytoplasmic segment spans residues 175-181; sequence SIASSHG.

The protein belongs to the Casparian strip membrane proteins (CASP) family. In terms of assembly, homodimer and heterodimers.

The protein resides in the cell membrane. This chain is CASP-like protein 5A1, found in Zea mays (Maize).